Consider the following 367-residue polypeptide: 3-dehydroquinate synthase (367 aa).

Residues 69 to 74 (DGESHK), 103 to 107 (GVIGD), 127 to 128 (TT), lysine 140, lysine 149, and 167 to 170 (TLAT) contribute to the NAD(+) site. Residues glutamate 182, histidine 245, and histidine 262 each contribute to the Zn(2+) site.

The protein belongs to the sugar phosphate cyclases superfamily. Dehydroquinate synthase family. Requires Co(2+) as cofactor. Zn(2+) serves as cofactor. It depends on NAD(+) as a cofactor.

It localises to the cytoplasm. The catalysed reaction is 7-phospho-2-dehydro-3-deoxy-D-arabino-heptonate = 3-dehydroquinate + phosphate. The protein operates within metabolic intermediate biosynthesis; chorismate biosynthesis; chorismate from D-erythrose 4-phosphate and phosphoenolpyruvate: step 2/7. Functionally, catalyzes the conversion of 3-deoxy-D-arabino-heptulosonate 7-phosphate (DAHP) to dehydroquinate (DHQ). This Stutzerimonas stutzeri (strain A1501) (Pseudomonas stutzeri) protein is 3-dehydroquinate synthase.